The primary structure comprises 428 residues: Histidinol dehydrogenase (428 aa).

3 residues coordinate NAD(+): tyrosine 124, glutamine 186, and asparagine 209. The substrate site is built by serine 233, glutamine 255, and histidine 258. 2 residues coordinate Zn(2+): glutamine 255 and histidine 258. Catalysis depends on proton acceptor residues glutamate 322 and histidine 323. 4 residues coordinate substrate: histidine 323, aspartate 356, glutamate 410, and histidine 415. A Zn(2+)-binding site is contributed by aspartate 356. Residue histidine 415 coordinates Zn(2+).

Belongs to the histidinol dehydrogenase family. Zn(2+) serves as cofactor.

It carries out the reaction L-histidinol + 2 NAD(+) + H2O = L-histidine + 2 NADH + 3 H(+). Its pathway is amino-acid biosynthesis; L-histidine biosynthesis; L-histidine from 5-phospho-alpha-D-ribose 1-diphosphate: step 9/9. In terms of biological role, catalyzes the sequential NAD-dependent oxidations of L-histidinol to L-histidinaldehyde and then to L-histidine. The protein is Histidinol dehydrogenase of Bacteroides fragilis (strain ATCC 25285 / DSM 2151 / CCUG 4856 / JCM 11019 / LMG 10263 / NCTC 9343 / Onslow / VPI 2553 / EN-2).